The following is a 312-amino-acid chain: Acetylglutamate kinase (312 aa).

Residues 76–77, Arg-98, and Asn-199 each bind substrate; that span reads GG.

This sequence belongs to the acetylglutamate kinase family. ArgB subfamily.

Its subcellular location is the cytoplasm. It catalyses the reaction N-acetyl-L-glutamate + ATP = N-acetyl-L-glutamyl 5-phosphate + ADP. The protein operates within amino-acid biosynthesis; L-arginine biosynthesis; N(2)-acetyl-L-ornithine from L-glutamate: step 2/4. Its function is as follows. Catalyzes the ATP-dependent phosphorylation of N-acetyl-L-glutamate. In Beutenbergia cavernae (strain ATCC BAA-8 / DSM 12333 / CCUG 43141 / JCM 11478 / NBRC 16432 / NCIMB 13614 / HKI 0122), this protein is Acetylglutamate kinase.